Consider the following 545-residue polypeptide: MEDKNILYGPEPFHPLADGTAGEQMFYALSRYADISGCIALTNAHTKENVLYEEFLKLSCRLAESFKKYGLKQNDTIAVCSENGLQFFLPLIASLYLGIIAAPVSDKYIERELIHSLGIVKPRIIFCSKNTFQKVLNVKSKLKYVETIIILDLNEDLGGYQCLNNFISQNSDINLDVKKFKPNSFNRDDQVALVMFSSGTTGVSKGVMLTHKNIVARFSHCKDPTFGNAINPTTAILTVIPFHHGFGMTTTLGYFTCGFRVALMHTFEEKLFLQSLQDYKVESTLLVPTLMAFFPKSALVEKYDLSHLKEIASGGAPLSKEIGEMVKKRFKLNFVRQGYGLTETTSAVLITPDTDVRPGSTGKIVPFHAVKVVDPTTGKILGPNETGELYFKGDMIMKSYYNNEEATKAIINKDGWLRSGDIAYYDNDGHFYIVDRLKSLIKYKGYQVAPAEIEGILLQHPYIVDAGVTGIPDEAAGELPAAGVVVQTGKYLNEQIVQNFVSSQVSTAKWLRGGVKFLDEIPKGSTGKIDRKVLRQMFEKHKSKL.

The Microbody targeting signal signature appears at 543–545 (SKL).

Belongs to the ATP-dependent AMP-binding enzyme family. Requires Mg(2+) as cofactor.

It is found in the peroxisome. It catalyses the reaction firefly D-luciferin + ATP + O2 = firefly oxyluciferin + hnu + AMP + CO2 + diphosphate. Produces green light with a wavelength of 562 nm. The polypeptide is Luciferin 4-monooxygenase (Photuris pensylvanica (Pennsylania firefly)).